Reading from the N-terminus, the 140-residue chain is Methylglyoxal synthase (140 aa).

Residues 1-140 (MKIALIAHDR…HEGDRRPLAF (140 aa)) form the MGS-like domain. Residues His8, Lys12, 34-37 (TGTT), and 54-55 (SG) each bind substrate. The active-site Proton donor/acceptor is Asp60. His87 serves as a coordination point for substrate.

Belongs to the methylglyoxal synthase family.

It catalyses the reaction dihydroxyacetone phosphate = methylglyoxal + phosphate. In terms of biological role, catalyzes the formation of methylglyoxal from dihydroxyacetone phosphate. The polypeptide is Methylglyoxal synthase (Enterococcus faecalis (strain ATCC 700802 / V583)).